The primary structure comprises 357 residues: S-adenosyl-L-methionine:benzoic acid/salicylic acid carboxyl methyltransferase 2 (357 aa).

Residue Y18 coordinates S-adenosyl-L-homocysteine. Position 25 (Q25) interacts with benzoate. The S-adenosyl-L-homocysteine site is built by C59, N64, D96, L97, S135, and F136. W157 contributes to the benzoate binding site. Mg(2+)-binding residues include N168, D254, F256, and N257. Q260 serves as a coordination point for benzoate.

It belongs to the methyltransferase superfamily. Type-7 methyltransferase family. In terms of tissue distribution, predominantly expressed in petal limbs and tubes of corollas.

It catalyses the reaction benzoate + S-adenosyl-L-methionine = methyl benzoate + S-adenosyl-L-homocysteine. The enzyme catalyses salicylate + S-adenosyl-L-methionine = methyl salicylate + S-adenosyl-L-homocysteine. It functions in the pathway aromatic compound metabolism. Functionally, converts benzoic acid into the volatile ester methyl benzoates. This scent, mostly produced in a rhythmical, diurnal manner, attracts the pollinators. This is S-adenosyl-L-methionine:benzoic acid/salicylic acid carboxyl methyltransferase 2 from Petunia hybrida (Petunia).